The sequence spans 259 residues: Oxaloacetate tautomerase FMP41, mitochondrial (259 aa).

Residues Glu-87, Glu-89, and Asp-121 each coordinate Mg(2+).

It belongs to the FAH family. Mg(2+) serves as cofactor. Mn(2+) is required as a cofactor.

Its subcellular location is the mitochondrion. The enzyme catalyses oxaloacetate = enol-oxaloacetate. Tautomerase that converts enol-oxaloacetate, a strong inhibitor of succinate dehydrogenase, to the physiological keto form of oxaloacetate. This chain is Oxaloacetate tautomerase FMP41, mitochondrial, found in Saccharomyces cerevisiae (strain ATCC 204508 / S288c) (Baker's yeast).